We begin with the raw amino-acid sequence, 794 residues long: Ent-kaurene synthase 1, chloroplastic (794 aa).

Residues 1-28 (MSLLLSNSVLVGPKFRSSRISHASASLD) constitute a chloroplast transit peptide. Mg(2+) is bound by residues aspartate 543, aspartate 547, asparagine 687, and glutamate 695. The DDXXD motif signature appears at 543-547 (DDFFD).

The protein belongs to the terpene synthase family. Requires Mg(2+) as cofactor. As to expression, accumulates in leaves, and, at low levels, in germinating seeds.

The protein localises to the plastid. Its subcellular location is the chloroplast. It catalyses the reaction ent-copalyl diphosphate = ent-kaur-16-ene + diphosphate. It functions in the pathway secondary metabolite biosynthesis; terpenoid biosynthesis. Its pathway is plant hormone biosynthesis; gibberellin biosynthesis. In terms of biological role, involved in the biosynthesis of ent-kaurene diterpenoids natural products such as oridonin, miltiradiene, eriocalyxin B and nezukol, known to exhibit antitumor, anti-inflammatory and antibacterial activities, and in the production of gibberellins phytohormones. Catalyzes the conversion of ent-copalyl diphosphate (ent-CPP) to ent-kaurene. The sequence is that of Ent-kaurene synthase 1, chloroplastic from Isodon eriocalyx (Plectranthus eriocalyx).